The sequence spans 131 residues: Profilin-9 (131 aa).

Residues cysteine 13 and cysteine 115 are joined by a disulfide bond. Residues 81–97 (AVIRGKKGSGGITVKKT) carry the Involved in PIP2 interaction motif. At threonine 111 the chain carries Phosphothreonine.

It belongs to the profilin family. Occurs in many kinds of cells as a complex with monomeric actin in a 1:1 ratio. Post-translationally, phosphorylated by MAP kinases.

It localises to the cytoplasm. The protein resides in the cytoskeleton. Its function is as follows. Binds to actin and affects the structure of the cytoskeleton. At high concentrations, profilin prevents the polymerization of actin, whereas it enhances it at low concentrations. The protein is Profilin-9 of Zea mays (Maize).